Consider the following 110-residue polypeptide: IQ domain-containing protein J (110 aa).

Positions 47–67 (ESKVKIIQRAWREYLQRQDPL) constitute an IQ domain. A disordered region spans residues 63-99 (RQDPLEKRSPSPPSVSSDKLSSSVSMNTFSDSSTPVS). Residues 76–87 (SVSSDKLSSSVS) show a composition bias toward low complexity. The segment covering 88–99 (MNTFSDSSTPVS) has biased composition (polar residues).

The polypeptide is IQ domain-containing protein J (Mus musculus (Mouse)).